Reading from the N-terminus, the 733-residue chain is mRNA 3'-end-processing protein rna14 (733 aa).

The interval 1-45 (MNSDDNVEADASSNIIKDSPKIKEQENTSTVNESDVLATSTTASS) is disordered. Over residues 27-45 (NTSTVNESDVLATSTTASS) the composition is skewed to polar residues. HAT repeat units follow at residues 85 to 117 (GKHEELRETYEQMLRPFPYVPRVWVDYISSELA), 119 to 150 (NDFHAVELLFSRCLVKVLSVDLWTLYLSYIRR), 158 to 193 (QSRSTITQAYEFVINTIGVDILSGPIWSEFVDFLRS), 204 to 237 (QKLDHVRRIYQRAITTPIHNIEKLWRDYDAFENS), 269 to 302 (EGLRVYDFTFERKYTKVERIAYSRWMNWIKWEQS), and 312 to 344 (MLQNRIAYAFEQAMLYVPLCPQIWLDGFSYFLS). Residues 404–414 (DSKASSSSESS) show a composition bias toward low complexity. The tract at residues 404-425 (DSKASSSSESSTDGNPQEKKLP) is disordered. An HAT 7 repeat occupies 523–557 (NDETNARALFEKAIPRIAADEAKPIYQKWLDYESN).

The protein localises to the nucleus. It localises to the cytoplasm. Component of the cleavage factor IA (CFIA) complex, which is involved in the endonucleolytic cleavage during polyadenylation-dependent pre-mRNA 3'-end formation. The protein is mRNA 3'-end-processing protein rna14 (rna14) of Schizosaccharomyces pombe (strain 972 / ATCC 24843) (Fission yeast).